Reading from the N-terminus, the 132-residue chain is Spermatogenesis-associated protein 33 (132 aa).

The segment at 1-60 (MGQSKSKPREKKEEEKSTTTLVTKSKEKVMEKEAKQSDKESQPAESLLFATSKHSRPSSS) is interaction with ATG16L1. Residues 1–81 (MGQSKSKPRE…SKKRSVIPQI (81 aa)) are disordered. Basic and acidic residues predominate over residues 24–42 (KSKEKVMEKEAKQSDKESQ). The interval 61–132 (SEDKPETKQR…IAAYDVHNTE (72 aa)) is interaction with VDAC2. A PQIIIT motif is present at residues 79 to 84 (PQIIIT). A Phosphoserine modification is found at S87. Residues 110-132 (DWGPYHRHRSPSTIAAYDVHNTE) are disordered.

Interacts (via PQIIIT motif) with PPP3R2 and PPP3CC. Interacts with VDAC2. Interacts with ATG16L1 (via WD repeats). Interacts with PPP3R1, PPP3CA and PPP3CB. As to expression, predominantly expressed in the testis (at protein level). Expressed in the sperm midpiece (at protein level).

It localises to the cytoplasm. The protein resides in the cytosol. Its subcellular location is the nucleus. The protein localises to the mitochondrion. In terms of biological role, plays an important role in sperm motility and male fertility. Required for sperm midpiece flexibility and for the localization of sperm calcineurin to the mitochondria. Promotes mitophagy as well as acts as an autophagy mediator in male germline cells. Links damaged mitochondria to autophagosomes via its binding to the outer mitochondrial membrane protein VDAC2, as well as to key autophagy machinery component ATG16L1. The sequence is that of Spermatogenesis-associated protein 33 (Spata33) from Mus musculus (Mouse).